The following is a 706-amino-acid chain: MGDERPHYYGKHGTPQKYDPTFKGPIYNRGCTDIICCVFLLLAIVGYVAVGIIAWTHGDPRKVIYPTDSRGEFCGQKGTKNENKPYLFYFNIVKCASPLVLLEFQCPTPQICVEKCPDRYLTYLNARSSRDFEYYKQFCVPGFKNNKGVAEVLQDGDCPAVLIPSKPLARRCFPAIHAYKGVLMVGNETTYEDGHGSRKNITDLVEGAKKANGVLEARQLAMRIFEDYTVSWYWIIIGLVIAMAMSLLFIILLRFLAGIMVWVMIIMVILVLGYGIFHCYMEYSRLRGEAGSDVSLVDLGFQTDFRVYLHLRQTWLAFMIILSILEVIIILLLIFLRKRILIAIALIKEASRAVGYVMCSLLYPLVTFFLLCLCIAYWASTAVFLSTSNEAVYKIFDDSPCPFTAKTCNPETFPSSNESRQCPNARCQFAFYGGESGYHRALLGLQIFNAFMFFWLANFVLALGQVTLAGAFASYYWALRKPDDLPAFPLFSAFGRALRYHTGSLAFGALILAIVQIIRVILEYLDQRLKAAENKFAKCLMTCLKCCFWCLEKFIKFLNRNAYIMIAIYGTNFCTSARNAFFLLMRNIIRVAVLDKVTDFLFLLGKLLIVGSVGILAFFFFTHRIRIVQDTAPPLNYYWVPILTVIVGSYLIAHGFFSVYGMCVDTLFLCFLEDLERNDGSAERPYFMSSTLKKLLNKTNKKAAES.

Residues 1–33 (MGDERPHYYGKHGTPQKYDPTFKGPIYNRGCTD) lie on the Cytoplasmic side of the membrane. The residue at position 14 (T14) is a Phosphothreonine. A helical transmembrane segment spans residues 34-54 (IICCVFLLLAIVGYVAVGIIA). Over 55-232 (WTHGDPRKVI…RIFEDYTVSW (178 aa)) the chain is Extracellular. Residues N187 and N200 are each glycosylated (N-linked (GlcNAc...) asparagine). Residues 233–253 (YWIIIGLVIAMAMSLLFIILL) form a helical membrane-spanning segment. Over 254–256 (RFL) the chain is Cytoplasmic. A helical transmembrane segment spans residues 257-277 (AGIMVWVMIIMVILVLGYGIF). Residues 278-315 (HCYMEYSRLRGEAGSDVSLVDLGFQTDFRVYLHLRQTW) lie on the Extracellular side of the membrane. Residues 316–336 (LAFMIILSILEVIIILLLIFL) form a helical membrane-spanning segment. Topologically, residues 337 to 364 (RKRILIAIALIKEASRAVGYVMCSLLYP) are cytoplasmic. Residues 365–385 (LVTFFLLCLCIAYWASTAVFL) form a helical membrane-spanning segment. Topologically, residues 386–457 (STSNEAVYKI…FNAFMFFWLA (72 aa)) are extracellular. N-linked (GlcNAc...) asparagine glycosylation is present at N417. The chain crosses the membrane as a helical span at residues 458–480 (NFVLALGQVTLAGAFASYYWALR). Over 481-504 (KPDDLPAFPLFSAFGRALRYHTGS) the chain is Cytoplasmic. The chain crosses the membrane as a helical span at residues 505–525 (LAFGALILAIVQIIRVILEYL). At 526-563 (DQRLKAAENKFAKCLMTCLKCCFWCLEKFIKFLNRNAY) the chain is on the extracellular side. A helical transmembrane segment spans residues 564-584 (IMIAIYGTNFCTSARNAFFLL). The Cytoplasmic portion of the chain corresponds to 585 to 599 (MRNIIRVAVLDKVTD). A helical transmembrane segment spans residues 600–620 (FLFLLGKLLIVGSVGILAFFF). The Extracellular portion of the chain corresponds to 621 to 638 (FTHRIRIVQDTAPPLNYY). Residues 639–659 (WVPILTVIVGSYLIAHGFFSV) form a helical membrane-spanning segment. At 660–706 (YGMCVDTLFLCFLEDLERNDGSAERPYFMSSTLKKLLNKTNKKAAES) the chain is on the cytoplasmic side.

Belongs to the CTL (choline transporter-like) family. As to quaternary structure, interacts with COCH. As to expression, present in supporting cells of the inner ear (at protein level). Expressed in inner ear vestibular tissue.

The protein localises to the cell membrane. The protein resides in the mitochondrion outer membrane. It catalyses the reaction choline(out) + n H(+)(in) = choline(in) + n H(+)(out). It carries out the reaction ethanolamine(out) + n H(+)(in) = ethanolamine(in) + n H(+)(out). In terms of biological role, choline/H+ antiporter, mainly in mitochodria. Also acts as a low-affinity ethanolamine/H+ antiporter, regulating the supply of extracellular ethanolamine (Etn) for the CDP-Etn pathway, redistribute intracellular Etn and balance the CDP-Cho and CDP-Etn arms of the Kennedy pathway. Functionally, does not exhibit choline transporter activity. The protein is Choline transporter-like protein 2 of Homo sapiens (Human).